A 603-amino-acid chain; its full sequence is Elongation factor 4 (603 aa).

The 183-residue stretch at 7–189 (VRIRNFCIIA…AVVERVPPPP (183 aa)) folds into the tr-type G domain. GTP-binding positions include 19-24 (DHGKST) and 136-139 (NKID).

This sequence belongs to the TRAFAC class translation factor GTPase superfamily. Classic translation factor GTPase family. LepA subfamily.

The protein resides in the cell inner membrane. It catalyses the reaction GTP + H2O = GDP + phosphate + H(+). In terms of biological role, required for accurate and efficient protein synthesis under certain stress conditions. May act as a fidelity factor of the translation reaction, by catalyzing a one-codon backward translocation of tRNAs on improperly translocated ribosomes. Back-translocation proceeds from a post-translocation (POST) complex to a pre-translocation (PRE) complex, thus giving elongation factor G a second chance to translocate the tRNAs correctly. Binds to ribosomes in a GTP-dependent manner. This chain is Elongation factor 4, found in Nostoc sp. (strain PCC 7120 / SAG 25.82 / UTEX 2576).